The sequence spans 121 residues: Ubiquitin-related modifier 1 (121 aa).

Glycine 121 carries the 1-thioglycine modification. Residue glycine 121 forms a Glycyl lysine isopeptide (Gly-Lys) (interchain with K-? in acceptor proteins) linkage.

This sequence belongs to the URM1 family. C-terminal thiocarboxylation occurs in 2 steps, it is first acyl-adenylated (-COAMP) via the hesA/moeB/thiF part of UBA4, then thiocarboxylated (-COSH) via the rhodanese domain of UBA4.

The protein resides in the cytoplasm. It participates in tRNA modification; 5-methoxycarbonylmethyl-2-thiouridine-tRNA biosynthesis. In terms of biological role, acts as a sulfur carrier required for 2-thiolation of mcm(5)S(2)U at tRNA wobble positions of cytosolic tRNA(Lys), tRNA(Glu) and tRNA(Gln). Serves as sulfur donor in tRNA 2-thiolation reaction by being thiocarboxylated (-COSH) at its C-terminus by the MOCS3 homolog UBA4. The sulfur is then transferred to tRNA to form 2-thiolation of mcm(5)S(2)U. Prior mcm(5) tRNA modification by the elongator complex is required for 2-thiolation. Also acts as a ubiquitin-like protein (UBL) that is covalently conjugated via an isopeptide bond to lysine residues of target proteins such as AHP1. The thiocarboxylated form serves as substrate for conjugation and oxidative stress specifically induces the formation of UBL-protein conjugates. The polypeptide is Ubiquitin-related modifier 1 (Ajellomyces capsulatus (strain NAm1 / WU24) (Darling's disease fungus)).